The following is a 130-amino-acid chain: Large ribosomal subunit protein eL32 (130 aa).

The protein belongs to the eukaryotic ribosomal protein eL32 family.

In Pyrococcus horikoshii (strain ATCC 700860 / DSM 12428 / JCM 9974 / NBRC 100139 / OT-3), this protein is Large ribosomal subunit protein eL32 (rpl32e).